A 184-amino-acid polypeptide reads, in one-letter code: ADP-ribosylation factor-like protein 2 (184 aa).

A lipid anchor (N-myristoyl glycine) is attached at Gly2. Residues 23–30 (GLDNAGKT), 66–70 (DIGGQ), and 125–128 (NKQD) each bind GTP.

This sequence belongs to the small GTPase superfamily. Arf family.

May be involved in trafficking events within the endosomal system. The chain is ADP-ribosylation factor-like protein 2 (arl2) from Dictyostelium discoideum (Social amoeba).